The sequence spans 663 residues: uncharacterized protein (663 aa).

ATP is bound at residue Gly207–Thr214.

The protein belongs to the DNA2/NAM7 helicase family.

This is an uncharacterized protein from Methanocaldococcus jannaschii (strain ATCC 43067 / DSM 2661 / JAL-1 / JCM 10045 / NBRC 100440) (Methanococcus jannaschii).